A 164-amino-acid chain; its full sequence is Dynein regulatory complex protein 8 (164 aa).

2 consecutive EF-hand domains span residues 16–51 (ELHK…LGCC) and 94–129 (AAED…EGEP).

The protein belongs to the DRC8 family. Component of the nexin-dynein regulatory complex (N-DRC).

Its subcellular location is the cytoplasm. It is found in the cytoskeleton. The protein resides in the flagellum axoneme. Its function is as follows. Component of the nexin-dynein regulatory complex (N-DRC), a key regulator of ciliary/flagellar motility which maintains the alignment and integrity of the distal axoneme and regulates microtubule sliding in motile axonemes. The chain is Dynein regulatory complex protein 8 (Efcab2) from Mus musculus (Mouse).